The following is a 356-amino-acid chain: (+)-(1(10)E,4E,6S,7R)-germacradien-6-ol synthase (356 aa).

Mg(2+) is bound by residues aspartate 86 and aspartate 91. Positions 86 to 91 match the DDXXXD motif motif; that stretch reads DDEYCD. Residue arginine 181 coordinates substrate. Residues asparagine 227 and serine 231 each coordinate Mg(2+). Lysine 234 contacts substrate. Glutamate 235 is a Mg(2+) binding site. Substrate is bound at residue 314-315; that stretch reads RY.

The protein belongs to the terpene synthase family. The cofactor is Mg(2+).

It carries out the reaction (2E,6E)-farnesyl diphosphate + H2O = (+)-(1(10)E,4E,6S,7R)-germacradien-6-ol + diphosphate. It functions in the pathway secondary metabolite biosynthesis; terpenoid biosynthesis. Functionally, catalyzes the conversion of (2E,6E)-farnesyl diphosphate (FPP) to yield the sesquiterpene (+)-(1(10)E,4E,6S,7R)-germacradien-6-ol via a putative 1,10-cyclization, which could require the abstraction of the pyrophosphate from FPP to yield the (E,E)-germacradienyl cation. The only accepted substrate is farnesyl diphosphate (FPP). The protein is (+)-(1(10)E,4E,6S,7R)-germacradien-6-ol synthase of Streptomyces pratensis (strain ATCC 33331 / IAF-45CD).